A 479-amino-acid polypeptide reads, in one-letter code: Aspartyl/glutamyl-tRNA(Asn/Gln) amidotransferase subunit B (479 aa).

It belongs to the GatB/GatE family. GatB subfamily. As to quaternary structure, heterotrimer of A, B and C subunits.

It carries out the reaction L-glutamyl-tRNA(Gln) + L-glutamine + ATP + H2O = L-glutaminyl-tRNA(Gln) + L-glutamate + ADP + phosphate + H(+). The catalysed reaction is L-aspartyl-tRNA(Asn) + L-glutamine + ATP + H2O = L-asparaginyl-tRNA(Asn) + L-glutamate + ADP + phosphate + 2 H(+). Its function is as follows. Allows the formation of correctly charged Asn-tRNA(Asn) or Gln-tRNA(Gln) through the transamidation of misacylated Asp-tRNA(Asn) or Glu-tRNA(Gln) in organisms which lack either or both of asparaginyl-tRNA or glutaminyl-tRNA synthetases. The reaction takes place in the presence of glutamine and ATP through an activated phospho-Asp-tRNA(Asn) or phospho-Glu-tRNA(Gln). This is Aspartyl/glutamyl-tRNA(Asn/Gln) amidotransferase subunit B from Streptococcus pyogenes serotype M1.